Reading from the N-terminus, the 493-residue chain is Cysteine sulfinic acid decarboxylase (493 aa).

Lys-305 is subject to N6-(pyridoxal phosphate)lysine.

The protein belongs to the group II decarboxylase family. Homodimer. Requires pyridoxal 5'-phosphate as cofactor. Expressed in kidney and liver not detected in lymphoid tissues and lung. Expressed in kidney, liver and brain. 7 and 4 times higher expression in kidney and liver than in brain, respectively. Low level of detection in skeletal muscle. Expressed in brain, olfactory bulb, liver, skeletal muscle and kidney with the highest expression in liver and lowest in skeletal muscle (at protein level).

The catalysed reaction is L-aspartate + H(+) = beta-alanine + CO2. The enzyme catalyses 3-sulfino-L-alanine + H(+) = hypotaurine + CO2. It carries out the reaction L-cysteate + H(+) = taurine + CO2. It functions in the pathway organosulfur biosynthesis; taurine biosynthesis; hypotaurine from L-cysteine: step 2/2. With respect to regulation, activated by Mn(2+). Inhibited by bis-carboxymethyl-trithiocarbonate, ethylxanthogenacetic acid and 2,5-disulfoaniline. Not affected by Li(+) within 0.05-40 mM concentration range. In terms of biological role, catalyzes the decarboxylation of L-aspartate, 3-sulfino-L-alanine (cysteine sulfinic acid), and L-cysteate to beta-alanine, hypotaurine and taurine, respectively. The preferred substrate is 3-sulfino-L-alanine. Does not exhibit any decarboxylation activity toward glutamate. The polypeptide is Cysteine sulfinic acid decarboxylase (Mus musculus (Mouse)).